The sequence spans 354 residues: UDP-3-O-acylglucosamine N-acyltransferase (354 aa).

His258 serves as the catalytic Proton acceptor.

The protein belongs to the transferase hexapeptide repeat family. LpxD subfamily. In terms of assembly, homotrimer.

It carries out the reaction a UDP-3-O-[(3R)-3-hydroxyacyl]-alpha-D-glucosamine + a (3R)-hydroxyacyl-[ACP] = a UDP-2-N,3-O-bis[(3R)-3-hydroxyacyl]-alpha-D-glucosamine + holo-[ACP] + H(+). It functions in the pathway bacterial outer membrane biogenesis; LPS lipid A biosynthesis. Its function is as follows. Catalyzes the N-acylation of UDP-3-O-acylglucosamine using 3-hydroxyacyl-ACP as the acyl donor. Is involved in the biosynthesis of lipid A, a phosphorylated glycolipid that anchors the lipopolysaccharide to the outer membrane of the cell. This chain is UDP-3-O-acylglucosamine N-acyltransferase, found in Sinorhizobium fredii (strain NBRC 101917 / NGR234).